We begin with the raw amino-acid sequence, 429 residues long: Histidinol dehydrogenase (429 aa).

NAD(+)-binding residues include tyrosine 127, glutamine 188, and asparagine 211. Residues serine 234, glutamine 256, and histidine 259 each coordinate substrate. Positions 256 and 259 each coordinate Zn(2+). Residues glutamate 324 and histidine 325 each act as proton acceptor in the active site. Residues histidine 325, aspartate 358, glutamate 412, and histidine 417 each contribute to the substrate site. Aspartate 358 is a Zn(2+) binding site. Histidine 417 contributes to the Zn(2+) binding site.

It belongs to the histidinol dehydrogenase family. The cofactor is Zn(2+).

It catalyses the reaction L-histidinol + 2 NAD(+) + H2O = L-histidine + 2 NADH + 3 H(+). The protein operates within amino-acid biosynthesis; L-histidine biosynthesis; L-histidine from 5-phospho-alpha-D-ribose 1-diphosphate: step 9/9. Its function is as follows. Catalyzes the sequential NAD-dependent oxidations of L-histidinol to L-histidinaldehyde and then to L-histidine. The polypeptide is Histidinol dehydrogenase (Bacillus cereus (strain ATCC 10987 / NRS 248)).